Consider the following 369-residue polypeptide: Flagellar P-ring protein 1 (369 aa).

An N-terminal signal peptide occupies residues 1–23; the sequence is MRKQSLVTLLMVLLSLVWLPASA.

This sequence belongs to the FlgI family. In terms of assembly, the basal body constitutes a major portion of the flagellar organelle and consists of four rings (L,P,S, and M) mounted on a central rod.

It localises to the periplasm. The protein resides in the bacterial flagellum basal body. Functionally, assembles around the rod to form the L-ring and probably protects the motor/basal body from shearing forces during rotation. This Yersinia pseudotuberculosis serotype I (strain IP32953) protein is Flagellar P-ring protein 1.